We begin with the raw amino-acid sequence, 107 residues long: Phosphoribosyl-ATP pyrophosphatase (107 aa).

Belongs to the PRA-PH family.

The protein resides in the cytoplasm. The enzyme catalyses 1-(5-phospho-beta-D-ribosyl)-ATP + H2O = 1-(5-phospho-beta-D-ribosyl)-5'-AMP + diphosphate + H(+). The protein operates within amino-acid biosynthesis; L-histidine biosynthesis; L-histidine from 5-phospho-alpha-D-ribose 1-diphosphate: step 2/9. This is Phosphoribosyl-ATP pyrophosphatase from Zymomonas mobilis subsp. mobilis (strain ATCC 31821 / ZM4 / CP4).